We begin with the raw amino-acid sequence, 342 residues long: Large ribosomal subunit protein uL3 (342 aa).

Residues 1–22 are disordered; sequence MGHRKLSSPRRGSAGLRPRKRA.

This sequence belongs to the universal ribosomal protein uL3 family. In terms of assembly, part of the 50S ribosomal subunit. Forms a cluster with proteins L14 and L24e.

One of the primary rRNA binding proteins, it binds directly near the 3'-end of the 23S rRNA, where it nucleates assembly of the 50S subunit. This Sulfolobus acidocaldarius (strain ATCC 33909 / DSM 639 / JCM 8929 / NBRC 15157 / NCIMB 11770) protein is Large ribosomal subunit protein uL3.